A 270-amino-acid polypeptide reads, in one-letter code: DNA repair protein RecO (270 aa).

Belongs to the RecO family.

Involved in DNA repair and RecF pathway recombination. This chain is DNA repair protein RecO, found in Synechococcus sp. (strain WH7803).